The sequence spans 160 residues: 6,7-dimethyl-8-ribityllumazine synthase (160 aa).

5-amino-6-(D-ribitylamino)uracil-binding positions include tryptophan 27, 59 to 61 (AIE), and 81 to 83 (VVI). A (2S)-2-hydroxy-3-oxobutyl phosphate-binding site is contributed by 86–87 (DT). Residue histidine 89 is the Proton donor of the active site. Residue asparagine 114 participates in 5-amino-6-(D-ribitylamino)uracil binding. Position 128 (arginine 128) interacts with (2S)-2-hydroxy-3-oxobutyl phosphate.

This sequence belongs to the DMRL synthase family. As to quaternary structure, homopentamer.

The enzyme catalyses (2S)-2-hydroxy-3-oxobutyl phosphate + 5-amino-6-(D-ribitylamino)uracil = 6,7-dimethyl-8-(1-D-ribityl)lumazine + phosphate + 2 H2O + H(+). Its pathway is cofactor biosynthesis; riboflavin biosynthesis; riboflavin from 2-hydroxy-3-oxobutyl phosphate and 5-amino-6-(D-ribitylamino)uracil: step 1/2. In terms of biological role, catalyzes the formation of 6,7-dimethyl-8-ribityllumazine by condensation of 5-amino-6-(D-ribitylamino)uracil with 3,4-dihydroxy-2-butanone 4-phosphate. This is the penultimate step in the biosynthesis of riboflavin. This is 6,7-dimethyl-8-ribityllumazine synthase from Mycobacterium leprae (strain Br4923).